A 64-amino-acid polypeptide reads, in one-letter code: Large ribosomal subunit protein bL35 (64 aa).

Residues 1–64 (MPKNKTNSGA…RKSIKKLLGK (64 aa)) are disordered.

This sequence belongs to the bacterial ribosomal protein bL35 family.

This is Large ribosomal subunit protein bL35 from Beutenbergia cavernae (strain ATCC BAA-8 / DSM 12333 / CCUG 43141 / JCM 11478 / NBRC 16432 / NCIMB 13614 / HKI 0122).